Reading from the N-terminus, the 418-residue chain is Serpin H1 (418 aa).

Residues 1–18 (MRALLLISTICLLARALA) form the signal peptide. Residue Lys94 is modified to N6-succinyllysine. Residues Asn120 and Asn125 are each glycosylated (N-linked (GlcNAc...) asparagine). Ser141 bears the Phosphoserine mark. Lys207 is subject to N6-acetyllysine. Lys296 carries the N6-succinyllysine modification. Position 319 is an N6-acetyllysine (Lys319). Positions 415 to 418 (RDEL) match the Prevents secretion from ER motif.

It belongs to the serpin family.

Its subcellular location is the endoplasmic reticulum lumen. In terms of biological role, binds specifically to collagen. Could be involved as a chaperone in the biosynthetic pathway of collagen. This is Serpin H1 (SERPINH1) from Bos taurus (Bovine).